Here is a 113-residue protein sequence, read N- to C-terminus: Hydrogenase maturation factor HypA (113 aa).

His-2 contacts Ni(2+). Positions 73, 76, 89, and 92 each coordinate Zn(2+).

This sequence belongs to the HypA/HybF family.

Involved in the maturation of [NiFe] hydrogenases. Required for nickel insertion into the metal center of the hydrogenase. The sequence is that of Hydrogenase maturation factor HypA from Moorella thermoacetica (strain ATCC 39073 / JCM 9320).